The following is a 281-amino-acid chain: Rhomboid protease AarA (281 aa).

7 consecutive transmembrane segments (helical) span residues 16-36 (FSLG…AVYF), 76-96 (MLHS…VIGI), 105-125 (FKLL…SAYW), 145-165 (IGVG…IYLI), 185-205 (QLYN…QSGV), 208-228 (AAHI…ILVP), and 233-253 (VANL…IYLY). The Nucleophile role is filled by serine 150. The active-site Charge relay system is histidine 210.

This sequence belongs to the peptidase S54 family.

The protein resides in the cell membrane. It carries out the reaction Cleaves type-1 transmembrane domains using a catalytic dyad composed of serine and histidine that are contributed by different transmembrane domains.. Functionally, rhomboid serine protease that catalyzes intramembrane proteolysis. Mediates quorum-sensing and the subsequent regulation of target genes via activation of the Tat protein export system. Catalyzes the proteolytic activation of TatA by removal of its N-terminal extension. This Providencia stuartii protein is Rhomboid protease AarA (aarA).